Here is an 857-residue protein sequence, read N- to C-terminus: uncharacterized protein (857 aa).

4 disordered regions span residues 316–339 (PPAP…TKEN), 484–561 (AKQP…PRTN), 619–777 (GQFP…PKPQ), and 809–836 (EQRP…STGK). 3 stretches are compositionally biased toward basic and acidic residues: residues 324–339 (PENK…TKEN), 518–534 (KKTE…KAEE), and 630–640 (QRAESSIDKDC). The span at 683 to 700 (RTTTVQPHSHSAQPTTLR) shows a compositional bias: polar residues. A compositionally biased stretch (low complexity) spans 708-725 (SSSLIASAKPAPPISSSS). Over residues 726-738 (TGPNVTNPNQSSA) the composition is skewed to polar residues. Residues 809-828 (EQRPEREAMKRQAQQERENA) show a composition bias toward basic and acidic residues.

This is an uncharacterized protein from Mus musculus (Mouse).